Consider the following 320-residue polypeptide: UV DNA damage endonuclease (320 aa).

Belongs to the uve1/UvsE family.

Functionally, component in a DNA repair pathway. Removal of UV LIGHT damaged nucleotides. Recognizes pyrimidine dimers and cleave a phosphodiester bond immediately 5' to the lesion. The protein is UV DNA damage endonuclease of Bacillus velezensis (strain DSM 23117 / BGSC 10A6 / LMG 26770 / FZB42) (Bacillus amyloliquefaciens subsp. plantarum).